The primary structure comprises 99 residues: Transcription factor 1 (99 aa).

2 may be involved in preference for HM-URA DNA regions span residues proline 52–valine 77 and glutamate 90–lysine 99. 2 DNA-binding regions span residues phenylalanine 61 and lysine 93–tyrosine 94.

It belongs to the bacterial histone-like protein family. As to quaternary structure, homodimer.

In terms of biological role, selectively binds to and inhibits the transcription of hydroxymethyluracil-(hmUra)-containing DNA, such as SP01 DNA, by RNA polymerase in vitro. This is Transcription factor 1 (TF1) from Bacillus phage SP01 (Bacteriophage SP01).